A 106-amino-acid polypeptide reads, in one-letter code: MVNVPKTRKTYCKGKTCRKHTQHKVTQYKAGKASLFAQGKRRYDRKQSGFGGQTKPVFHKKAKTTKKVVLRLECVKCKTRAQLTLKRCKHFELGGEKKQKGQALQF.

K40 is subject to N6-methyllysine; by RKM3. Position 55 is an N6-methyllysine; by RKM4 (K55).

It belongs to the eukaryotic ribosomal protein eL42 family. As to quaternary structure, component of the large ribosomal subunit (LSU). Mature yeast ribosomes consist of a small (40S) and a large (60S) subunit. The 40S small subunit contains 1 molecule of ribosomal RNA (18S rRNA) and 33 different proteins (encoded by 57 genes). The large 60S subunit contains 3 rRNA molecules (25S, 5.8S and 5S rRNA) and 46 different proteins (encoded by 81 genes). In terms of processing, in wild-type cells, 78% of L42 is monomethylated at both Lys-40 and Lys-55, and 22% are a mixture of species with either residue monomethylated.

The protein resides in the cytoplasm. Its function is as follows. Component of the ribosome, a large ribonucleoprotein complex responsible for the synthesis of proteins in the cell. The small ribosomal subunit (SSU) binds messenger RNAs (mRNAs) and translates the encoded message by selecting cognate aminoacyl-transfer RNA (tRNA) molecules. The large subunit (LSU) contains the ribosomal catalytic site termed the peptidyl transferase center (PTC), which catalyzes the formation of peptide bonds, thereby polymerizing the amino acids delivered by tRNAs into a polypeptide chain. The nascent polypeptides leave the ribosome through a tunnel in the LSU and interact with protein factors that function in enzymatic processing, targeting, and the membrane insertion of nascent chains at the exit of the ribosomal tunnel. The protein is Large ribosomal subunit protein eL42A of Saccharomyces cerevisiae (strain ATCC 204508 / S288c) (Baker's yeast).